The chain runs to 166 residues: MKVYVIDYHKDDPKKCTGRKLVKLKLAELTRVGRGIILNPFSERTLSINDKDILIKSGITIIDTSWNNTSQNEFKNVRGEHRRLPILFAGNPIHYGIAYKLSSLEALMATLYILDEMKEAIKFSNVVKWGHTFIELNKELLEAYRNKDEEEIKKIEKEIIEKILRK.

Residues threonine 17, isoleucine 62, leucine 84, tyrosine 99, and serine 103 each coordinate S-adenosyl-L-methionine.

It belongs to the TDD superfamily. TSR3 family.

The protein localises to the cytoplasm. The enzyme catalyses an N(1)-methylpseudouridine in rRNA + S-adenosyl-L-methionine = N(1)-methyl-N(3)-[(3S)-3-amino-3-carboxypropyl]pseudouridine in rRNA + S-methyl-5'-thioadenosine + H(+). Its function is as follows. Aminocarboxypropyltransferase that catalyzes the aminocarboxypropyl transfer on pseudouridine corresponding to position 914 in M.jannaschii 16S rRNA. It constitutes the last step in biosynthesis of the hypermodified N1-methyl-N3-(3-amino-3-carboxypropyl) pseudouridine (m1acp3-Psi). The polypeptide is 16S rRNA aminocarboxypropyltransferase (Saccharolobus islandicus (strain M.16.27) (Sulfolobus islandicus)).